The following is a 662-amino-acid chain: Neurexin-2-beta (662 aa).

Over residues 1–10 (MPPGGSGQGG) the composition is skewed to gly residues. The disordered stretch occupies residues 1–27 (MPPGGSGQGGCPRRPPALAGPLPPPPP). Positions 1 to 46 (MPPGGSGQGGCPRRPPALAGPLPPPPPPPPLPLLLGLLLLLGAAEG) are cleaved as a signal peptide. The Extracellular segment spans residues 47 to 586 (ARVSSSLSTT…EVIRESSSTT (540 aa)). The region spanning 87–295 (TTYIFGKGGA…HLRLVGEGPS (209 aa)) is the Laminin G-like domain. Residues Asp139 and Val156 each contribute to the Ca(2+) site. An N-linked (GlcNAc...) asparagine glycan is attached at Asn186. Ca(2+) contacts are provided by Ile238 and Asn240. O-linked (Xyl...) (heparan sulfate) serine glycosylation is present at Ser350. 3 disordered regions span residues 408-458 (ATQD…LPPT), 476-496 (LLSP…ATGA), and 530-557 (LGPG…PGFP). The helical transmembrane segment at 587–607 (GMVVGIVAAAALCILILLYAM) threads the bilayer. The Cytoplasmic portion of the chain corresponds to 608–662 (YKYRNRDEGSYQVDQSRNYISNSAQSNGAVVKEKAPAAPKTPSKAKKNKDKEYYV). Residues 629 to 662 (NSAQSNGAVVKEKAPAAPKTPSKAKKNKDKEYYV) form a disordered region.

It belongs to the neurexin family. Interacts (via cytoplasmic C-terminal region) with CASK. Isoform Beta 4b binds alpha-dystroglycan and neuroligins NLGN1, NLGN2 and NLGN3. Interacts with CBLN1, CBLN2 and, less avidly, with CBLN4. Interacts with CLSTN3. In terms of processing, O-glycosylated; contains heparan sulfate. Heparan sulfate attachment is required for synapse development by mediating interactions with neuroligins. In terms of tissue distribution, brain (neuronal synapse).

The protein localises to the presynaptic cell membrane. Its function is as follows. Neuronal cell surface protein that may be involved in cell recognition and cell adhesion. The sequence is that of Neurexin-2-beta (Nrxn2) from Rattus norvegicus (Rat).